The primary structure comprises 243 residues: 3-deoxy-manno-octulosonate cytidylyltransferase (243 aa).

It belongs to the KdsB family.

The protein localises to the cytoplasm. It carries out the reaction 3-deoxy-alpha-D-manno-oct-2-ulosonate + CTP = CMP-3-deoxy-beta-D-manno-octulosonate + diphosphate. It participates in nucleotide-sugar biosynthesis; CMP-3-deoxy-D-manno-octulosonate biosynthesis; CMP-3-deoxy-D-manno-octulosonate from 3-deoxy-D-manno-octulosonate and CTP: step 1/1. Activates KDO (a required 8-carbon sugar) for incorporation into bacterial lipopolysaccharide in Gram-negative bacteria. The sequence is that of 3-deoxy-manno-octulosonate cytidylyltransferase from Wigglesworthia glossinidia brevipalpis.